Reading from the N-terminus, the 235-residue chain is Probable transcriptional regulatory protein CJJ81176_1187 (235 aa).

It belongs to the TACO1 family.

It is found in the cytoplasm. The polypeptide is Probable transcriptional regulatory protein CJJ81176_1187 (Campylobacter jejuni subsp. jejuni serotype O:23/36 (strain 81-176)).